The primary structure comprises 428 residues: Trigger factor (428 aa).

The PPIase FKBP-type domain maps to 166-250; sequence GDIVTFDFKG…IKNIKEKILP (85 aa).

This sequence belongs to the FKBP-type PPIase family. Tig subfamily.

It is found in the cytoplasm. The catalysed reaction is [protein]-peptidylproline (omega=180) = [protein]-peptidylproline (omega=0). Involved in protein export. Acts as a chaperone by maintaining the newly synthesized protein in an open conformation. Functions as a peptidyl-prolyl cis-trans isomerase. This is Trigger factor from Mycoplasma mycoides subsp. mycoides SC (strain CCUG 32753 / NCTC 10114 / PG1).